Here is a 255-residue protein sequence, read N- to C-terminus: Imidazole glycerol phosphate synthase subunit HisF (255 aa).

Active-site residues include aspartate 11 and aspartate 130.

The protein belongs to the HisA/HisF family. In terms of assembly, heterodimer of HisH and HisF.

Its subcellular location is the cytoplasm. It catalyses the reaction 5-[(5-phospho-1-deoxy-D-ribulos-1-ylimino)methylamino]-1-(5-phospho-beta-D-ribosyl)imidazole-4-carboxamide + L-glutamine = D-erythro-1-(imidazol-4-yl)glycerol 3-phosphate + 5-amino-1-(5-phospho-beta-D-ribosyl)imidazole-4-carboxamide + L-glutamate + H(+). It participates in amino-acid biosynthesis; L-histidine biosynthesis; L-histidine from 5-phospho-alpha-D-ribose 1-diphosphate: step 5/9. Its function is as follows. IGPS catalyzes the conversion of PRFAR and glutamine to IGP, AICAR and glutamate. The HisF subunit catalyzes the cyclization activity that produces IGP and AICAR from PRFAR using the ammonia provided by the HisH subunit. The chain is Imidazole glycerol phosphate synthase subunit HisF from Maricaulis maris (strain MCS10) (Caulobacter maris).